We begin with the raw amino-acid sequence, 359 residues long: Peroxisome assembly protein 12 (359 aa).

The Peroxisomal matrix segment spans residues 1 to 19 (MAEHGAHITTASVVDDQPS). A helical transmembrane segment spans residues 20–47 (IFEVVAQDSLMSAVRPALQHVVKVLAES). Over 48–51 (NPAH) the chain is Cytoplasmic. Residues 52–76 (FGFFWRWFDEIFTLLDLLLQQHYLS) traverse the membrane as a helical segment. Residues 77–109 (KTSASFSENFYGLKRIVMGDQHKLQRLANAGLP) lie on the Peroxisomal matrix side of the membrane. A helical transmembrane segment spans residues 110 to 139 (KQQFMKSIMFLVLLPYLKVKLEKLVSSLRE). At 140 to 144 (EDEYS) the chain is on the cytoplasmic side. A helical transmembrane segment spans residues 145–183 (IHPPSSRWKRFYRAFLAAYPFVNMAWEGWFLVQQLRYIL). Topologically, residues 184–249 (GKAQHHSPLL…VGGVALSLST (66 aa)) are peroxisomal matrix. Residues 250–277 (GLSVGVFFLQFLEWWYSSENQETIKSLT) form a helical membrane-spanning segment. Residues 278–359 (ALPTPPPPVH…HLIKLYSPEN (82 aa)) lie on the Cytoplasmic side of the membrane. Residues Cys-304, Cys-307, Cys-325, and Cys-328 each contribute to the Zn(2+) site. An RING-type; degenerate zinc finger spans residues 304 to 343 (CPLCRKNRVNDTVLATSGYVFCYRCVFHYVRSHQACPITG).

It belongs to the pex2/pex10/pex12 family. Component of the PEX2-PEX10-PEX12 retrotranslocation channel, composed of PEX2, PEX10 and PEX12. Interacts with PEX19 via its cytoplasmic domain.

The protein resides in the peroxisome membrane. It participates in protein modification; protein ubiquitination. Functionally, component of a retrotranslocation channel required for peroxisome organization by mediating export of the PEX5 receptor from peroxisomes to the cytosol, thereby promoting PEX5 recycling. The retrotranslocation channel is composed of PEX2, PEX10 and PEX12; each subunit contributing transmembrane segments that coassemble into an open channel that specifically allows the passage of PEX5 through the peroxisomal membrane. PEX12 also regulates PEX5 recycling by activating the E3 ubiquitin-protein ligase activity of PEX10. When PEX5 recycling is compromised, PEX12 stimulates PEX10-mediated polyubiquitination of PEX5, leading to its subsequent degradation. The sequence is that of Peroxisome assembly protein 12 (PEX12) from Bos taurus (Bovine).